A 155-amino-acid chain; its full sequence is Protein FAM201A (155 aa).

Residues 130–155 are disordered; the sequence is QDQGCGQHRPHSPRLVDIALPGGGWT.

The sequence is that of Protein FAM201A (FAM201A) from Homo sapiens (Human).